A 418-amino-acid polypeptide reads, in one-letter code: MGLTLTQKILSAKIGREVKAGELIEVDVDMVLGNDVTAPVAIKEFEKIGKEEVFDKTKIALVPDHFVPNKDIKSAEQVNIMRKFAKKHGIVNFFEVGQMGIEHALLPEKGLVLPGDVVIGADSHTCTYGALTCFSTGVGSTDMAAAMATGKAWFKVPEAIKFVLKGNLQKWVSGKDVILYIIGKIGVDGALYKSMEFTGNIKALSIDDRFTIANMAIEAGAKNGIFDFDEITEAYVKGRAKREYKVFERDEDAEYSEVYEINLDEIRPQVAFPHLPENTRSIDEVGKVKIDQVVIGSCTNGRLSDMEIAYKILKGKKVHPDVRLLIFPATQEIYLECVKRGYIEEFIKAGAAVSTPTCGPCLGGHMGILARGERALATTNRNFVGRMGHPESEVYLSSPAVAAASAIAGYIVSPEEVE.

Residues C298, C358, and C361 each contribute to the [4Fe-4S] cluster site.

The protein belongs to the aconitase/IPM isomerase family. LeuC type 2 subfamily. In terms of assembly, heterodimer of LeuC and LeuD. Requires [4Fe-4S] cluster as cofactor.

It carries out the reaction (2R,3S)-3-isopropylmalate = (2S)-2-isopropylmalate. It functions in the pathway amino-acid biosynthesis; L-leucine biosynthesis; L-leucine from 3-methyl-2-oxobutanoate: step 2/4. Catalyzes the isomerization between 2-isopropylmalate and 3-isopropylmalate, via the formation of 2-isopropylmaleate. In Thermoanaerobacter sp. (strain X514), this protein is 3-isopropylmalate dehydratase large subunit.